Here is a 364-residue protein sequence, read N- to C-terminus: Fructose-bisphosphate aldolase B (364 aa).

Ala-2 is modified (N-acetylalanine). Position 13 is an N6-succinyllysine (Lys-13). Residue Ser-36 is modified to Phosphoserine. The residue at position 39 (Thr-39) is a Phosphothreonine. Position 43 (Arg-43) interacts with beta-D-fructose 1,6-bisphosphate. At Ser-89 the chain carries Phosphoserine. Thr-119 carries the phosphothreonine modification. Lys-121 carries the post-translational modification N6-succinyllysine. Ser-132 carries the post-translational modification Phosphoserine. The active-site Proton acceptor is Glu-188. The active-site Schiff-base intermediate with dihydroxyacetone-P is the Lys-230. A phosphoserine mark is found at Ser-272, Ser-276, Ser-299, and Ser-301. 272–274 contributes to the beta-D-fructose 1,6-bisphosphate binding site; the sequence is SGG. Arg-304 contacts beta-D-fructose 1,6-bisphosphate. Phosphoserine is present on Ser-309. An N6-succinyllysine modification is found at Lys-317.

It belongs to the class I fructose-bisphosphate aldolase family. As to quaternary structure, homotetramer. Interacts with BBS1, BBS2, BBS4 and BBS7. Forms a ternary complex with G6PD and TP53; this interaction is direct.

Its subcellular location is the cytoplasm. It is found in the cytosol. The protein localises to the cytoskeleton. The protein resides in the microtubule organizing center. It localises to the centrosome. Its subcellular location is the centriolar satellite. The catalysed reaction is beta-D-fructose 1,6-bisphosphate = D-glyceraldehyde 3-phosphate + dihydroxyacetone phosphate. It carries out the reaction beta-D-fructose 1-phosphate = D-glyceraldehyde + dihydroxyacetone phosphate. The protein operates within carbohydrate degradation; glycolysis; D-glyceraldehyde 3-phosphate and glycerone phosphate from D-glucose: step 4/4. It participates in carbohydrate biosynthesis; gluconeogenesis. It functions in the pathway carbohydrate metabolism; fructose metabolism. Catalyzes the aldol cleavage of fructose 1,6-biphosphate to form two triosephosphates dihydroxyacetone phosphate and D-glyceraldehyde 3-phosphate in glycolysis as well as the reverse stereospecific aldol addition reaction in gluconeogenesis. In fructolysis, metabolizes fructose 1-phosphate derived from the phosphorylation of dietary fructose by fructokinase into dihydroxyacetone phosphate and D-glyceraldehyde. Acts as an adapter independently of its enzymatic activity, exerts a tumor suppressor role by stabilizing the ternary complex with G6PD and TP53 to inhibit G6PD activity and keep oxidative pentose phosphate metabolism in check. The sequence is that of Fructose-bisphosphate aldolase B (Aldob) from Rattus norvegicus (Rat).